Consider the following 427-residue polypeptide: Enolase (427 aa).

Position 162 (Gln162) interacts with (2R)-2-phosphoglycerate. Glu204 serves as the catalytic Proton donor. The Mg(2+) site is built by Asp241, Glu284, and Asp311. 4 residues coordinate (2R)-2-phosphoglycerate: Lys336, Arg365, Ser366, and Lys387. The active-site Proton acceptor is Lys336.

Belongs to the enolase family. The cofactor is Mg(2+).

The protein resides in the cytoplasm. Its subcellular location is the secreted. It localises to the cell surface. It carries out the reaction (2R)-2-phosphoglycerate = phosphoenolpyruvate + H2O. It functions in the pathway carbohydrate degradation; glycolysis; pyruvate from D-glyceraldehyde 3-phosphate: step 4/5. In terms of biological role, catalyzes the reversible conversion of 2-phosphoglycerate (2-PG) into phosphoenolpyruvate (PEP). It is essential for the degradation of carbohydrates via glycolysis. The polypeptide is Enolase (Natranaerobius thermophilus (strain ATCC BAA-1301 / DSM 18059 / JW/NM-WN-LF)).